The sequence spans 100 residues: Large ribosomal subunit protein uL23c (100 aa).

This sequence belongs to the universal ribosomal protein uL23 family. As to quaternary structure, part of the 50S ribosomal subunit.

Its subcellular location is the plastid. It is found in the chloroplast. Binds to 23S rRNA. This Euglena gracilis protein is Large ribosomal subunit protein uL23c (rpl23).